Reading from the N-terminus, the 182-residue chain is Large ribosomal subunit protein uL16 (182 aa).

This sequence belongs to the universal ribosomal protein uL16 family. In terms of assembly, part of the 50S ribosomal subunit.

The protein is Large ribosomal subunit protein uL16 of Thermococcus kodakarensis (strain ATCC BAA-918 / JCM 12380 / KOD1) (Pyrococcus kodakaraensis (strain KOD1)).